The sequence spans 491 residues: Anthranilate synthase component 1 (491 aa).

L-tryptophan is bound by residues S49 and 271 to 273; that span reads PYL. A chorismate-binding site is contributed by 306 to 307; that stretch reads GT. E333 lines the Mg(2+) pocket. Chorismate-binding positions include Y421, R441, 455 to 457, and G457; that span reads GAG. E470 provides a ligand contact to Mg(2+).

Belongs to the anthranilate synthase component I family. As to quaternary structure, heterotetramer consisting of two non-identical subunits: a beta subunit (TrpG) and a large alpha subunit (TrpE). It depends on Mg(2+) as a cofactor.

It carries out the reaction chorismate + L-glutamine = anthranilate + pyruvate + L-glutamate + H(+). The protein operates within amino-acid biosynthesis; L-tryptophan biosynthesis; L-tryptophan from chorismate: step 1/5. With respect to regulation, feedback inhibited by tryptophan. In terms of biological role, part of a heterotetrameric complex that catalyzes the two-step biosynthesis of anthranilate, an intermediate in the biosynthesis of L-tryptophan. In the first step, the glutamine-binding beta subunit (TrpG) of anthranilate synthase (AS) provides the glutamine amidotransferase activity which generates ammonia as a substrate that, along with chorismate, is used in the second step, catalyzed by the large alpha subunit of AS (TrpE) to produce anthranilate. In the absence of TrpG, TrpE can synthesize anthranilate directly from chorismate and high concentrations of ammonia. This chain is Anthranilate synthase component 1 (trpE), found in Neisseria gonorrhoeae (strain ATCC 700825 / FA 1090).